Reading from the N-terminus, the 62-residue chain is Conotoxin Qc5.2 (62 aa).

Positions 1–22 (MRCVPVFIILLLLSPSAPSVDA) are cleaved as a signal peptide. Positions 23 to 48 (HPMTKDDVPQASLHDDAKRTLQVPWM) are excised as a propeptide. Valine 60 is subject to Valine amide.

It belongs to the conotoxin T superfamily. Post-translationally, contains 2 disulfide bonds that can be either 'C1-C3, C2-C4' or 'C1-C4, C2-C3', since these disulfide connectivities have been observed for conotoxins with cysteine framework V (for examples, see AC P0DQQ7 and AC P81755). Expressed by the venom duct.

It localises to the secreted. The chain is Conotoxin Qc5.2 from Conus quercinus (Oak cone).